Here is a 284-residue protein sequence, read N- to C-terminus: Probable palmitoyltransferase ZDHHC24 (284 aa).

Over methionine 1–proline 18 the chain is Cytoplasmic. A helical membrane pass occupies residues leucine 19–leucine 39. Residues glycine 40–alanine 52 lie on the Extracellular side of the membrane. A helical transmembrane segment spans residues leucine 53–leucine 73. Residues arginine 74 to arginine 137 are Cytoplasmic-facing. Residues alanine 94–leucine 144 enclose the DHHC domain. Cysteine 124 functions as the S-palmitoyl cysteine intermediate in the catalytic mechanism. Residues proline 138–glycine 158 form a helical membrane-spanning segment. Over proline 159–glutamine 166 the chain is Extracellular. Residues alanine 167 to glycine 187 traverse the membrane as a helical segment. At lysine 188–alanine 195 the chain is on the cytoplasmic side. The helical transmembrane segment at leucine 196 to phenylalanine 216 threads the bilayer. The Extracellular segment spans residues histidine 217–serine 284.

The protein belongs to the DHHC palmitoyltransferase family.

It localises to the membrane. The catalysed reaction is L-cysteinyl-[protein] + hexadecanoyl-CoA = S-hexadecanoyl-L-cysteinyl-[protein] + CoA. In terms of biological role, probable palmitoyltransferase that could catalyze the addition of palmitate onto various protein substrates. In Mus musculus (Mouse), this protein is Probable palmitoyltransferase ZDHHC24.